Consider the following 276-residue polypeptide: Large ribosomal subunit protein uL2 (276 aa).

The interval 221-276 is disordered; sequence RGSVMNPNDHPHGGGEGRAPIGRKAPVTPWGKPTLGLKTRKKKNKSDQYIIRRRKK.

The protein belongs to the universal ribosomal protein uL2 family. In terms of assembly, part of the 50S ribosomal subunit. Forms a bridge to the 30S subunit in the 70S ribosome.

Functionally, one of the primary rRNA binding proteins. Required for association of the 30S and 50S subunits to form the 70S ribosome, for tRNA binding and peptide bond formation. It has been suggested to have peptidyltransferase activity; this is somewhat controversial. Makes several contacts with the 16S rRNA in the 70S ribosome. This chain is Large ribosomal subunit protein uL2, found in Brevibacillus brevis (strain 47 / JCM 6285 / NBRC 100599).